The following is a 38-amino-acid chain: U9-ctenitoxin-Pk1a (38 aa).

4 cysteine pairs are disulfide-bonded: C2–C17, C9–C22, C16–C36, and C24–C34.

In terms of tissue distribution, expressed by the venom gland.

It is found in the secreted. The protein is U9-ctenitoxin-Pk1a of Phoneutria keyserlingi (Brazilian wandering spider).